A 204-amino-acid polypeptide reads, in one-letter code: Dephospho-CoA kinase (204 aa).

The DPCK domain occupies 4–201 (VIGLTGGIAS…EKYLAMCKKN (198 aa)). 12–17 (ASGKTT) is a binding site for ATP.

This sequence belongs to the CoaE family.

The protein localises to the cytoplasm. It carries out the reaction 3'-dephospho-CoA + ATP = ADP + CoA + H(+). Its pathway is cofactor biosynthesis; coenzyme A biosynthesis; CoA from (R)-pantothenate: step 5/5. Catalyzes the phosphorylation of the 3'-hydroxyl group of dephosphocoenzyme A to form coenzyme A. This chain is Dephospho-CoA kinase, found in Vibrio parahaemolyticus serotype O3:K6 (strain RIMD 2210633).